The primary structure comprises 165 residues: Crossover junction endodeoxyribonuclease RuvC (165 aa).

Active-site residues include aspartate 7, glutamate 67, and aspartate 140. Mg(2+)-binding residues include aspartate 7, glutamate 67, and aspartate 140.

This sequence belongs to the RuvC family. As to quaternary structure, homodimer which binds Holliday junction (HJ) DNA. The HJ becomes 2-fold symmetrical on binding to RuvC with unstacked arms; it has a different conformation from HJ DNA in complex with RuvA. In the full resolvosome a probable DNA-RuvA(4)-RuvB(12)-RuvC(2) complex forms which resolves the HJ. Mg(2+) is required as a cofactor.

The protein localises to the cytoplasm. The catalysed reaction is Endonucleolytic cleavage at a junction such as a reciprocal single-stranded crossover between two homologous DNA duplexes (Holliday junction).. Its function is as follows. The RuvA-RuvB-RuvC complex processes Holliday junction (HJ) DNA during genetic recombination and DNA repair. Endonuclease that resolves HJ intermediates. Cleaves cruciform DNA by making single-stranded nicks across the HJ at symmetrical positions within the homologous arms, yielding a 5'-phosphate and a 3'-hydroxyl group; requires a central core of homology in the junction. The consensus cleavage sequence is 5'-(A/T)TT(C/G)-3'. Cleavage occurs on the 3'-side of the TT dinucleotide at the point of strand exchange. HJ branch migration catalyzed by RuvA-RuvB allows RuvC to scan DNA until it finds its consensus sequence, where it cleaves and resolves the cruciform DNA. This Thermotoga petrophila (strain ATCC BAA-488 / DSM 13995 / JCM 10881 / RKU-1) protein is Crossover junction endodeoxyribonuclease RuvC.